A 430-amino-acid polypeptide reads, in one-letter code: Trigger factor (430 aa).

The 86-residue stretch at 163–248 (GDTVVFDFAG…IHEIKAQELP (86 aa)) folds into the PPIase FKBP-type domain.

Belongs to the FKBP-type PPIase family. Tig subfamily.

The protein localises to the cytoplasm. It catalyses the reaction [protein]-peptidylproline (omega=180) = [protein]-peptidylproline (omega=0). In terms of biological role, involved in protein export. Acts as a chaperone by maintaining the newly synthesized protein in an open conformation. Functions as a peptidyl-prolyl cis-trans isomerase. The chain is Trigger factor from Exiguobacterium sibiricum (strain DSM 17290 / CCUG 55495 / CIP 109462 / JCM 13490 / 255-15).